Reading from the N-terminus, the 714-residue chain is Methylmalonyl-CoA mutase (714 aa).

One can recognise a B12-binding domain in the interval 584-714 (RPRILIAKMG…VLNLISQHHD (131 aa)). An adenosylcob(III)alamin-binding site is contributed by histidine 597.

This sequence belongs to the methylmalonyl-CoA mutase family. Homodimer. Interacts with ArgK. The cofactor is adenosylcob(III)alamin.

It catalyses the reaction (R)-methylmalonyl-CoA = succinyl-CoA. Catalyzes the interconversion of succinyl-CoA and methylmalonyl-CoA. Could be part of a pathway that converts succinate to propionate. In Escherichia coli (strain K12), this protein is Methylmalonyl-CoA mutase (scpA).